We begin with the raw amino-acid sequence, 101 residues long: UPF0235 protein MMP1055 (101 aa).

It belongs to the UPF0235 family.

The sequence is that of UPF0235 protein MMP1055 from Methanococcus maripaludis (strain DSM 14266 / JCM 13030 / NBRC 101832 / S2 / LL).